The primary structure comprises 105 residues: UPF0145 protein Aflv_1588 (105 aa).

This sequence belongs to the UPF0145 family.

This Anoxybacillus flavithermus (strain DSM 21510 / WK1) protein is UPF0145 protein Aflv_1588.